The primary structure comprises 621 residues: Lamin-C (621 aa).

The disordered stretch occupies residues Met-1 to Lys-47. The head stretch occupies residues Met-1–Lys-47. Over residues Thr-7 to Gly-31 the composition is skewed to polar residues. Positions Thr-33–Ser-42 are enriched in low complexity. Ser-34 carries the post-translational modification Phosphoserine. The IF rod domain maps to Glu-46–Leu-402. A coil 1A region spans residues Lys-47–Val-85. The interval Asn-86 to Val-95 is linker 1. A coil 1B region spans residues Tyr-96 to Thr-233. The segment at Arg-234 to Gln-257 is linker 2. The interval Gln-258 to Asn-403 is coil 2. The disordered stretch occupies residues Ile-404–Val-458. The tail stretch occupies residues Ile-404–Phe-621. Ser-406 and Ser-441 each carry phosphoserine. The span at Arg-409–Ser-450 shows a compositional bias: polar residues. A Phosphothreonine modification is found at Thr-443. The Nuclear localization signal signature appears at Lys-453–Val-458. In terms of domain architecture, LTD spans Ser-468–Arg-582. Residues Val-585–Gly-605 are disordered.

The protein belongs to the intermediate filament family. As to quaternary structure, interacts with MAN1. In terms of tissue distribution, first detected from late stage 12 in the oenocytes, abdominal segments, hindgut and posterior spiracles, with expression increasing in stage 13 (at protein level). In stage 14, also becomes detectable in the foregut (at protein level). Stage 15 shows expression in the epidermis, dorsal longitudinal trunk, pharynx, esophagus and proventriculus, with the dorsal pharyngeal musculature showing expression in late stage 15 (at protein level). In stage 16 embryos, also detected in the exit glia with increasing expression in the somatic musculature (at protein level). Also detected in the visceral mesoderm but not in the midgut or central nervous system until the end of embryogenesis (at protein level). In third instar larvae, detectable at varying levels in all cell types (at protein level). Expressed in spermatocytes (at protein level).

It localises to the nucleus. It is found in the nucleus lamina. Its function is as follows. Lamins are components of the nuclear lamina, a fibrous layer on the nucleoplasmic side of the inner nuclear membrane, which is thought to provide a framework for the nuclear envelope and may also interact with chromatin. In spermatocytes, regulates cytokinesis during meiosis. The protein is Lamin-C (LamC) of Drosophila melanogaster (Fruit fly).